The chain runs to 141 residues: Nucleoside diphosphate kinase (141 aa).

Residues lysine 11, phenylalanine 59, arginine 87, threonine 93, arginine 104, and asparagine 114 each coordinate ATP. Histidine 117 functions as the Pros-phosphohistidine intermediate in the catalytic mechanism.

The protein belongs to the NDK family. In terms of assembly, homotetramer. It depends on Mg(2+) as a cofactor.

It is found in the cytoplasm. It carries out the reaction a 2'-deoxyribonucleoside 5'-diphosphate + ATP = a 2'-deoxyribonucleoside 5'-triphosphate + ADP. The catalysed reaction is a ribonucleoside 5'-diphosphate + ATP = a ribonucleoside 5'-triphosphate + ADP. Major role in the synthesis of nucleoside triphosphates other than ATP. The ATP gamma phosphate is transferred to the NDP beta phosphate via a ping-pong mechanism, using a phosphorylated active-site intermediate. This chain is Nucleoside diphosphate kinase, found in Janthinobacterium sp. (strain Marseille) (Minibacterium massiliensis).